The primary structure comprises 965 residues: Valine--tRNA ligase (965 aa).

Positions Met-1–Gln-22 are disordered. The 'HIGH' region signature appears at Pro-56–His-66. Positions Lys-568–Ser-572 match the 'KMSKS' region motif. Residue Lys-571 coordinates ATP. Residues Leu-896–Leu-965 are a coiled coil.

This sequence belongs to the class-I aminoacyl-tRNA synthetase family. ValS type 1 subfamily. Monomer.

The protein resides in the cytoplasm. It carries out the reaction tRNA(Val) + L-valine + ATP = L-valyl-tRNA(Val) + AMP + diphosphate. Functionally, catalyzes the attachment of valine to tRNA(Val). As ValRS can inadvertently accommodate and process structurally similar amino acids such as threonine, to avoid such errors, it has a 'posttransfer' editing activity that hydrolyzes mischarged Thr-tRNA(Val) in a tRNA-dependent manner. The chain is Valine--tRNA ligase from Yersinia pestis.